We begin with the raw amino-acid sequence, 198 residues long: MTTILQINSAARSQGAQSTLLANELTAKLQQSNPGAKVVVRDLLADALPHLDESVLGAFFTPADKRTAEQNAIVAKSDALIAELQAADVIVIGAPMYNFGISSQLKTYFDWIARAGVTFRYTENGPEGLIKGKKVHVVTARGGKYAGTPNDSQTPYLRTFLGFVGMTDVNFIFAEGLNLGPDAQSAALAGAREAIAAA.

Position 96-99 (96-99 (MYNF)) interacts with FMN.

It belongs to the azoreductase type 1 family. In terms of assembly, homodimer. FMN serves as cofactor.

It carries out the reaction 2 a quinone + NADH + H(+) = 2 a 1,4-benzosemiquinone + NAD(+). The catalysed reaction is N,N-dimethyl-1,4-phenylenediamine + anthranilate + 2 NAD(+) = 2-(4-dimethylaminophenyl)diazenylbenzoate + 2 NADH + 2 H(+). In terms of biological role, quinone reductase that provides resistance to thiol-specific stress caused by electrophilic quinones. Its function is as follows. Also exhibits azoreductase activity. Catalyzes the reductive cleavage of the azo bond in aromatic azo compounds to the corresponding amines. This is FMN-dependent NADH:quinone oxidoreductase 6 from Burkholderia lata (strain ATCC 17760 / DSM 23089 / LMG 22485 / NCIMB 9086 / R18194 / 383).